A 248-amino-acid chain; its full sequence is Probable transcriptional regulatory protein OCAR_7305/OCA5_c08120 (248 aa).

Belongs to the TACO1 family.

Its subcellular location is the cytoplasm. In Afipia carboxidovorans (strain ATCC 49405 / DSM 1227 / KCTC 32145 / OM5) (Oligotropha carboxidovorans), this protein is Probable transcriptional regulatory protein OCAR_7305/OCA5_c08120.